A 476-amino-acid chain; its full sequence is Glycogen synthase (476 aa).

K15 is a binding site for ADP-alpha-D-glucose.

It belongs to the glycosyltransferase 1 family. Bacterial/plant glycogen synthase subfamily.

The enzyme catalyses [(1-&gt;4)-alpha-D-glucosyl](n) + ADP-alpha-D-glucose = [(1-&gt;4)-alpha-D-glucosyl](n+1) + ADP + H(+). The protein operates within glycan biosynthesis; glycogen biosynthesis. Functionally, synthesizes alpha-1,4-glucan chains using ADP-glucose. The chain is Glycogen synthase from Bacillus cereus (strain ATCC 14579 / DSM 31 / CCUG 7414 / JCM 2152 / NBRC 15305 / NCIMB 9373 / NCTC 2599 / NRRL B-3711).